A 439-amino-acid polypeptide reads, in one-letter code: Maintenance of mitochondrial morphology protein 1 (439 aa).

Residues 1–76 are Lumenal-facing; the sequence is MSQDLIETTA…NGNTWSFTQG (76 aa). Residues 77–97 traverse the membrane as a helical segment; the sequence is LVIGQVSVIFIIIVFVKFFVF. Residues 98 to 439 are Cytoplasmic-facing; the sequence is ADSSSHIPTK…TPGEYVNSNI (342 aa). Disordered regions lie at residues 125-145, 309-336, and 405-425; these read KHSN…SLDS, MNGY…DGGT, and REPV…GTSA. The region spanning 165–395 is the SMP-LTD domain; sequence ASESLDWFNV…EPRFQVVRLP (231 aa). Composition is skewed to low complexity over residues 315-326 and 410-424; these read ENANGDGASSSN and KKTT…NGTS.

It belongs to the MMM1 family. Homodimer. Component of the ER-mitochondria encounter structure (ERMES) or MDM complex, composed of MMM1, MDM10, MDM12 and MDM34. An MMM1 homodimer associates with one molecule of MDM12 on each side in a pairwise head-to-tail manner, and the SMP-LTD domains of MMM1 and MDM12 generate a continuous hydrophobic tunnel for phospholipid trafficking.

It localises to the endoplasmic reticulum membrane. Component of the ERMES/MDM complex, which serves as a molecular tether to connect the endoplasmic reticulum (ER) and mitochondria. Components of this complex are involved in the control of mitochondrial shape and protein biogenesis, and function in nonvesicular lipid trafficking between the ER and mitochondria. The MDM12-MMM1 subcomplex functions in the major beta-barrel assembly pathway that is responsible for biogenesis of all outer membrane beta-barrel proteins, and acts in a late step after the SAM complex. The MDM10-MDM12-MMM1 subcomplex further acts in the TOM40-specific pathway after the action of the MDM12-MMM1 complex. Essential for establishing and maintaining the structure of mitochondria and maintenance of mtDNA nucleoids. The protein is Maintenance of mitochondrial morphology protein 1 of Candida albicans (strain SC5314 / ATCC MYA-2876) (Yeast).